The following is a 433-amino-acid chain: Divergent protein kinase domain 2B (433 aa).

A signal peptide spans 1–29 (MEPRLGPKAAALHLGWPFLLLWVSGLSYS). N100 carries an N-linked (GlcNAc...) asparagine glycan.

Belongs to the DIPK family.

It localises to the secreted. This chain is Divergent protein kinase domain 2B (DIPK2B), found in Bos taurus (Bovine).